Consider the following 779-residue polypeptide: GATOR2 complex protein WDR24 (779 aa).

WD repeat units lie at residues S66 to Q106, E112 to T152, G155 to R195, A199 to I239, Q243 to A285, and E289 to A332. Disordered stretches follow at residues L506–A526 and D570–S590. Residues N707–A729 form a C4-type zinc finger. C708, C711, C722, C725, C732, C735, C746, C749, H751, H754, H757, C768, C772, H774, and C776 together coordinate Zn(2+). An RING-type; atypical zinc finger spans residues S730–T779.

It belongs to the WD repeat WDR24 family. As to quaternary structure, component of the GATOR2 subcomplex, composed of MIOS, SEC13, SEH1L, WDR24 and WDR59. The GATOR2 complex interacts with CASTOR1 and CASTOR2; the interaction is negatively regulated by arginine. The GATOR2 complex interacts with SESN1, SESN2 and SESN3; the interaction is negatively regulated by amino acids.

The protein resides in the lysosome membrane. It carries out the reaction S-ubiquitinyl-[E2 ubiquitin-conjugating enzyme]-L-cysteine + [acceptor protein]-L-lysine = [E2 ubiquitin-conjugating enzyme]-L-cysteine + N(6)-ubiquitinyl-[acceptor protein]-L-lysine.. It participates in protein modification; protein ubiquitination. The GATOR2 complex is negatively regulated by the upstream amino acid sensors CASTOR1 and SESN2, which sequester the GATOR2 complex in absence of amino acids. In the presence of abundant amino acids, GATOR2 is released from CASTOR1 and SESN2 and activated. Its function is as follows. Catalytic component of the GATOR2 complex, a multiprotein complex that acts as an activator of the amino acid-sensing branch of the mTORC1 signaling pathway. The GATOR2 complex indirectly activates mTORC1 through the inhibition of the GATOR1 subcomplex. GATOR2 probably acts as an E3 ubiquitin-protein ligase toward GATOR1. In the presence of abundant amino acids, the GATOR2 complex mediates ubiquitination of the NPRL2 core component of the GATOR1 complex, leading to GATOR1 inactivation. In the absence of amino acids, GATOR2 is inhibited, activating the GATOR1 complex. In addition to its role in regulation of the mTORC1 complex, promotes the acidification of lysosomes and facilitates autophagic flux. Within the GATOR2 complex, WDR24 constitutes the catalytic subunit that mediates 'Lys-6'-linked ubiquitination of NPRL2. This is GATOR2 complex protein WDR24 from Danio rerio (Zebrafish).